Reading from the N-terminus, the 283-residue chain is Orotidine 5'-phosphate decarboxylase (283 aa).

Lysine 97 acts as the Proton donor in catalysis.

Belongs to the OMP decarboxylase family. Type 2 subfamily.

It catalyses the reaction orotidine 5'-phosphate + H(+) = UMP + CO2. Its pathway is pyrimidine metabolism; UMP biosynthesis via de novo pathway; UMP from orotate: step 2/2. This chain is Orotidine 5'-phosphate decarboxylase, found in Clostridium botulinum (strain Okra / Type B1).